The primary structure comprises 262 residues: Type III pantothenate kinase (262 aa).

Position 6-13 (6-13 (DVGNTNAV)) interacts with ATP. Substrate is bound by residues Tyr-100 and 107 to 110 (GADR). The active-site Proton acceptor is Asp-109. Asp-129 is a K(+) binding site. Thr-132 contacts ATP. Thr-184 is a substrate binding site.

This sequence belongs to the type III pantothenate kinase family. As to quaternary structure, homodimer. NH4(+) serves as cofactor. K(+) is required as a cofactor.

The protein resides in the cytoplasm. The catalysed reaction is (R)-pantothenate + ATP = (R)-4'-phosphopantothenate + ADP + H(+). It participates in cofactor biosynthesis; coenzyme A biosynthesis; CoA from (R)-pantothenate: step 1/5. Functionally, catalyzes the phosphorylation of pantothenate (Pan), the first step in CoA biosynthesis. The polypeptide is Type III pantothenate kinase (Bacillus cereus (strain G9842)).